A 185-amino-acid polypeptide reads, in one-letter code: Ribonuclease M5 (185 aa).

The Toprim domain occupies 4 to 87 (KEIIVVEGKD…AFLPKEEALA (84 aa)). Glu10, Asp56, and Asp58 together coordinate Mg(2+).

This sequence belongs to the ribonuclease M5 family. Requires Mg(2+) as cofactor.

The protein localises to the cytoplasm. It carries out the reaction Endonucleolytic cleavage of RNA, removing 21 and 42 nucleotides, respectively, from the 5'- and 3'-termini of a 5S-rRNA precursor.. Functionally, required for correct processing of both the 5' and 3' ends of 5S rRNA precursor. Cleaves both sides of a double-stranded region yielding mature 5S rRNA in one step. The chain is Ribonuclease M5 from Bacillus anthracis.